The following is a 418-amino-acid chain: UDP-N-acetylglucosamine 1-carboxyvinyltransferase 2 (418 aa).

Residue 22-23 (KN) participates in phosphoenolpyruvate binding. R93 provides a ligand contact to UDP-N-acetyl-alpha-D-glucosamine. C117 acts as the Proton donor in catalysis. Position 117 is a 2-(S-cysteinyl)pyruvic acid O-phosphothioketal (C117). UDP-N-acetyl-alpha-D-glucosamine contacts are provided by residues 122–126 (RPIDQ), D305, and I327.

It belongs to the EPSP synthase family. MurA subfamily.

Its subcellular location is the cytoplasm. The enzyme catalyses phosphoenolpyruvate + UDP-N-acetyl-alpha-D-glucosamine = UDP-N-acetyl-3-O-(1-carboxyvinyl)-alpha-D-glucosamine + phosphate. It participates in cell wall biogenesis; peptidoglycan biosynthesis. In terms of biological role, cell wall formation. Adds enolpyruvyl to UDP-N-acetylglucosamine. The polypeptide is UDP-N-acetylglucosamine 1-carboxyvinyltransferase 2 (Clostridium acetobutylicum (strain ATCC 824 / DSM 792 / JCM 1419 / IAM 19013 / LMG 5710 / NBRC 13948 / NRRL B-527 / VKM B-1787 / 2291 / W)).